The sequence spans 350 residues: NAD-dependent protein deacetylase sirtuin-2 (350 aa).

Residues 4–14 (LRNLFTQTLGL) carry the Nuclear export signal motif. Ser-16 is modified (phosphoserine). Positions 20–301 (RLLDELTLEG…LALADLLGWK (282 aa)) constitute a Deacetylase sirtuin-type domain. Residues 48–52 (AGIST) and 58–60 (DFR) each bind NAD(+). Ser-63 is modified (phosphoserine). 130–133 (QNID) contributes to the NAD(+) binding site. His-150 serves as the catalytic Proton acceptor. Residues Cys-158 and Cys-163 each coordinate Zn(2+). Ser-170 carries the phosphoserine modification. Cys-184 and Cys-187 together coordinate Zn(2+). NAD(+) is bound by residues 225–226 (TS), 249–251 (NKE), and Cys-287. A disordered region spans residues 312 to 350 (ANIDAQSGSQASNPSATVSPRKSPPPAKEAARTKEKEEH). Polar residues predominate over residues 315–331 (DAQSGSQASNPSATVSP). Phosphoserine is present on residues Ser-330 and Ser-334. Basic and acidic residues predominate over residues 340-350 (EAARTKEKEEH).

This sequence belongs to the sirtuin family. Class I subfamily. As to quaternary structure, interacts with CDC20, FOXO3 and FZR1. Associates with microtubules in primary cortical mature neurons. Homotrimer. Interacts (via both phosphorylated, unphosphorylated, active or inactive forms) with HDAC6; the interaction is necessary for the complex to interact with alpha-tubulin, suggesting that these proteins belong to a large complex that deacetylates the cytoskeleton. Interacts with FOXO1; the interaction is disrupted upon serum-starvation or oxidative stress, leading to increased level of acetylated FOXO1 and induction of autophagy. Interacts with RELA; the interaction occurs in the cytoplasm and is increased in a TNF-alpha-dependent manner. Interacts with HOXA10; the interaction is direct. Interacts with YWHAB and YWHAG; the interactions occur in a AKT-dependent manner and increase SIRT2-dependent TP53 deacetylation. Interacts with MAPK1/ERK2 and MAPK3/ERK1; the interactions increase SIRT2 stability and deacetylation activity. Interacts (phosphorylated form) with KMT5A isoform 2; the interaction is direct, stimulates KMT5A-mediated methyltransferase activity on histone at 'Lys-20' (H4K20me1) and is increased in a H(2)O(2)-induced oxidative stress-dependent manner. Interacts with G6PD; the interaction is enhanced by H(2)O(2) treatment. Interacts with a G1/S-specific cyclin E-CDK2 complex. Interacts with AURKA, CDK5R1 (p35 form) and CDK5 and HIF1A. Interacts with the tRNA ligase SARS1; recruited to the VEGFA promoter via interaction with SARS1. Interacts with BEX4; negatively regulates alpha-tubulin deacetylation by SIRT2. Zn(2+) serves as cofactor. Post-translationally, phosphorylated at phosphoserine and phosphothreonine. Phosphorylated at Ser-330 by a mitotic kinase CDK1/cyclin B at the G2/M transition; phosphorylation regulates the delay in cell-cycle progression. Phosphorylated at Ser-330 by a mitotic kinase G1/S-specific cyclin E/Cdk2 complex; phosphorylation inactivates SIRT2-mediated alpha-tubulin deacetylation and thereby negatively regulates cell adhesion, cell migration and neurite outgrowth during neuronal differentiation. Phosphorylated by cyclin A/Cdk2 and p35-Cdk5 complexes and to a lesser extent by the cyclin D3/Cdk4 and cyclin B/Cdk1, in vitro. Dephosphorylated at Ser-330 by CDC14A and CDC14B around early anaphase. In terms of processing, acetylated by EP300; acetylation leads both to the decreased of SIRT2-mediated alpha-tubulin deacetylase activity and SIRT2-mediated down-regulation of TP53 transcriptional activity. Ubiquitinated. Expressed in the cerebellum, cerebral cortex and cervival spinal cord. Expressed in Purkinje cells, oligodendrocytes and Schwann cells (at protein level). Expressed in the central nervous system (CNS).

The protein localises to the nucleus. The protein resides in the cytoplasm. It localises to the perinuclear region. It is found in the cytoskeleton. Its subcellular location is the microtubule organizing center. The protein localises to the centrosome. The protein resides in the centriole. It localises to the spindle. It is found in the midbody. Its subcellular location is the chromosome. The protein localises to the perikaryon. The protein resides in the cell projection. It localises to the growth cone. It is found in the myelin membrane. It catalyses the reaction N(6)-acetyl-L-lysyl-[protein] + NAD(+) + H2O = 2''-O-acetyl-ADP-D-ribose + nicotinamide + L-lysyl-[protein]. The enzyme catalyses N(6)-tetradecanoyl-L-lysyl-[protein] + NAD(+) + H2O = 2''-O-tetradecanoyl-ADP-D-ribose + nicotinamide + L-lysyl-[protein]. It carries out the reaction N(6)-hexadecanoyl-L-lysyl-[protein] + NAD(+) + H2O = 2''-O-hexadecanoyl-ADP-D-ribose + nicotinamide + L-lysyl-[protein]. With respect to regulation, inhibited by Sirtinol, A3 and M15 small molecules. Inhibited by nicotinamide. Inhibited by a macrocyclic peptide inhibitor S2iL5. Inhibited by EP300-induced acetylation. In terms of biological role, NAD-dependent protein deacetylase, which deacetylates internal lysines on histone and alpha-tubulin as well as many other proteins such as key transcription factors. Participates in the modulation of multiple and diverse biological processes such as cell cycle control, genomic integrity, microtubule dynamics, cell differentiation, metabolic networks, and autophagy. Plays a major role in the control of cell cycle progression and genomic stability. Functions in the antephase checkpoint preventing precocious mitotic entry in response to microtubule stress agents, and hence allowing proper inheritance of chromosomes. Positively regulates the anaphase promoting complex/cyclosome (APC/C) ubiquitin ligase complex activity by deacetylating CDC20 and FZR1, then allowing progression through mitosis. Associates both with chromatin at transcriptional start sites (TSSs) and enhancers of active genes. Plays a role in cell cycle and chromatin compaction through epigenetic modulation of the regulation of histone H4 'Lys-20' methylation (H4K20me1) during early mitosis. Specifically deacetylates histone H4 at 'Lys-16' (H4K16ac) between the G2/M transition and metaphase enabling H4K20me1 deposition by KMT5A leading to ulterior levels of H4K20me2 and H4K20me3 deposition throughout cell cycle, and mitotic S-phase progression. Deacetylates KMT5A modulating KMT5A chromatin localization during the mitotic stress response. Also deacetylates histone H3 at 'Lys-57' (H3K56ac) during the mitotic G2/M transition. During oocyte meiosis progression, may deacetylate histone H4 at 'Lys-16' (H4K16ac) and alpha-tubulin, regulating spindle assembly and chromosome alignment by influencing microtubule dynamics and kinetochore function. Deacetylates histone H4 at 'Lys-16' (H4K16ac) at the VEGFA promoter and thereby contributes to regulate expression of VEGFA, a key regulator of angiogenesis. Deacetylates alpha-tubulin at 'Lys-40' and hence controls neuronal motility, oligodendroglial cell arbor projection processes and proliferation of non-neuronal cells. Phosphorylation at Ser-368 by a G1/S-specific cyclin E-CDK2 complex inactivates SIRT2-mediated alpha-tubulin deacetylation, negatively regulating cell adhesion, cell migration and neurite outgrowth during neuronal differentiation. Deacetylates PARD3 and participates in the regulation of Schwann cell peripheral myelination formation during early postnatal development and during postinjury remyelination. Involved in several cellular metabolic pathways. Plays a role in the regulation of blood glucose homeostasis by deacetylating and stabilizing phosphoenolpyruvate carboxykinase PCK1 activity in response to low nutrient availability. Acts as a key regulator in the pentose phosphate pathway (PPP) by deacetylating and activating the glucose-6-phosphate G6PD enzyme, and therefore, stimulates the production of cytosolic NADPH to counteract oxidative damage. Maintains energy homeostasis in response to nutrient deprivation as well as energy expenditure by inhibiting adipogenesis and promoting lipolysis. Attenuates adipocyte differentiation by deacetylating and promoting FOXO1 interaction to PPARG and subsequent repression of PPARG-dependent transcriptional activity. Plays a role in the regulation of lysosome-mediated degradation of protein aggregates by autophagy in neuronal cells. Deacetylates FOXO1 in response to oxidative stress or serum deprivation, thereby negatively regulating FOXO1-mediated autophagy. Deacetylates a broad range of transcription factors and co-regulators regulating target gene expression. Deacetylates transcriptional factor FOXO3 stimulating the ubiquitin ligase SCF(SKP2)-mediated FOXO3 ubiquitination and degradation. Deacetylates HIF1A and therefore promotes HIF1A degradation and inhibition of HIF1A transcriptional activity in tumor cells in response to hypoxia. Deacetylates RELA in the cytoplasm inhibiting NF-kappaB-dependent transcription activation upon TNF-alpha stimulation. Inhibits transcriptional activation by deacetylating p53/TP53 and EP300. Also deacetylates EIF5A. Functions as a negative regulator on oxidative stress-tolerance in response to anoxia-reoxygenation conditions. Plays a role as tumor suppressor. In addition to protein deacetylase activity, also has activity toward long-chain fatty acyl groups and mediates protein-lysine demyristoylation and depalmitoylation of target proteins, such as ARF6 and KRAS, thereby regulating their association with membranes. The protein is NAD-dependent protein deacetylase sirtuin-2 (Sirt2) of Rattus norvegicus (Rat).